The sequence spans 550 residues: Vacuolar protein 8 (550 aa).

A lipid anchor (N-myristoyl glycine) is attached at Gly2. Residues Cys4 and Cys7 are each lipidated (S-palmitoyl cysteine). ARM repeat units follow at residues 75 to 114 (TEKD…NLAV), 116 to 155 (AENK…NLAT), 157 to 196 (DENK…NMTH), 198 to 237 (YENR…NIAV), 241 to 280 (HRKR…NLAS), 282 to 321 (ERYQ…NISI), 323 to 363 (PLNE…NLAA), and 454 to 493 (FIEC…QLLE). A Phosphothreonine modification is found at Thr548. Residue Ser550 is modified to Phosphoserine.

It belongs to the beta-catenin family.

It is found in the golgi apparatus membrane. Its subcellular location is the vacuole membrane. Functions in both vacuole inheritance and protein targeting from the cytoplasm to vacuole. The sequence is that of Vacuolar protein 8 (vac8) from Schizosaccharomyces pombe (strain 972 / ATCC 24843) (Fission yeast).